Reading from the N-terminus, the 1205-residue chain is Nitric oxide synthase 3 (1205 aa).

Disordered stretches follow at residues 1 to 20 (MGNL…LGLG) and 26 to 73 (CGKQ…FPRV). Residues 33 to 47 (SPAPEPSWAPAPATP) show a composition bias toward pro residues. C96 and C101 together coordinate Zn(2+). The interval 100 to 489 (RCLGSLVLPR…PDPWKGSAAK (390 aa)) is interaction with NOSIP. S104 is a (6R)-L-erythro-5,6,7,8-tetrahydrobiopterin binding site. A Phosphoserine modification is found at S116. A heme b-binding site is contributed by C186. The L-arginine site is built by Q250, W359, Y360, and E364. R368 contributes to the (6R)-L-erythro-5,6,7,8-tetrahydrobiopterin binding site. N369 provides a ligand contact to L-arginine. Residues A449, W450, and F463 each coordinate (6R)-L-erythro-5,6,7,8-tetrahydrobiopterin. Residue Y478 coordinates heme b. Phosphothreonine is present on T498. FMN-binding residues include S529, E530, T531, R533, S575, and T576. Phosphoserine occurs at positions 618, 636, and 641. 4 residues coordinate FMN: S657, C664, E690, and Q694. An NADP(+)-binding site is contributed by R781. The disordered stretch occupies residues 796–850 (LQYQPGDHISPHPPPRSSHRPGQGGPRVAPFSERPLMPRTPPPGGPPPSWVRDPR). H803 lines the FAD pocket. Residues 833 to 844 (PRTPPPGGPPPS) show a composition bias toward pro residues. 5 residues coordinate FAD: R939, Y941, S942, T957, and A959. T1018, R1051, S1080, R1081, K1087, Y1089, and Q1091 together coordinate NADP(+). Position 1177 is a phosphothreonine (T1177). A phosphoserine mark is found at S1179 and S1181.

It belongs to the NOS family. Homodimer. Interacts with NOSIP and NOSTRIN. Interacts with HSP90AB1. Forms a complex with ASL, ASS1 and SLC7A1; the complex regulates cell-autonomous L-arginine synthesis and citrulline recycling while channeling extracellular L-arginine to nitric oxide synthesis pathway. Heme b is required as a cofactor. FAD serves as cofactor. It depends on FMN as a cofactor. The cofactor is (6R)-L-erythro-5,6,7,8-tetrahydrobiopterin.

The protein localises to the membrane. It localises to the caveola. Its subcellular location is the cytoplasm. The protein resides in the cytoskeleton. It is found in the golgi apparatus. The protein localises to the cell membrane. It carries out the reaction 2 L-arginine + 3 NADPH + 4 O2 + H(+) = 2 L-citrulline + 2 nitric oxide + 3 NADP(+) + 4 H2O. Stimulated by calcium/calmodulin. Inhibited by NOSIP and NOSTRIN. Functionally, produces nitric oxide (NO) which is implicated in vascular smooth muscle relaxation through a cGMP-mediated signal transduction pathway. NO mediates vascular endothelial growth factor (VEGF)-induced angiogenesis in coronary vessels and promotes blood clotting through the activation of platelets. This chain is Nitric oxide synthase 3 (NOS3), found in Ovis aries (Sheep).